A 258-amino-acid chain; its full sequence is Leucine-rich repeat-containing protein 3B (258 aa).

Residues 1 to 33 form the signal peptide; the sequence is MTPLDLWLSRSIPMCLLLQSLVLMVLCFPSAST. An LRRNT domain is found at 34-68; it reads CPKGCTCQRSESPPHGLNVTCSLSRLKEIPPDVPP. N-linked (GlcNAc...) asparagine glycosylation is present at Asn-51. LRR repeat units follow at residues 69–90, 93–114, and 118–139; these read DTQLLQLDRNHISLVPDRIFHG, MLRRLNLSHNAVETLGEGAFIG, and SLEVLDLSYNRITSVHKDAFAR. Asn-98 is a glycosylation site (N-linked (GlcNAc...) asparagine). The region spanning 149–196 is the LRRCT domain; sequence NPWHCDCALQQALGGMAHNHERVLCRSSELRDQEGQPFMAVDADLCNL. A helical membrane pass occupies residues 204 to 224; the sequence is AMLVTMFGWFAMVISYVVYYV.

This sequence belongs to the LRRC3 family.

The protein localises to the membrane. This is Leucine-rich repeat-containing protein 3B (lrrc3b) from Danio rerio (Zebrafish).